A 163-amino-acid chain; its full sequence is Lysosomal enzyme trafficking factor (163 aa).

The next 2 membrane-spanning stretches (helical) occupy residues Met-40–Phe-60 and Leu-98–Leu-118.

This sequence belongs to the LYSET family. Interacts with GNPTAB; this interaction is important for proper localization of GNPTAB in Golgi stacks. Interacts with MBTPS1.

The protein localises to the golgi apparatus membrane. In terms of biological role, required for mannose-6-phosphate-dependent trafficking of lysosomal enzymes. LYSET bridges GlcNAc-1-phosphate transferase (GNPTAB), to the membrane-bound transcription factor site-1 protease (MBTPS1), thus allowing proteolytic activation of the GNPTAB. GNPTAB is involved in the regulation of M6P-dependent Golgi-to-lysosome trafficking of lysosomal enzymes. LYSET is thus an essential factor for maturation and delivery of lysosomal hydrolases. Its function is as follows. (Microbial infection) Essential for infection by muliple viruses, including SARS-CoV-2, that utilize activated cathepsins for entry after M6P-dependent lysosomal transport. The polypeptide is Lysosomal enzyme trafficking factor (Homo sapiens (Human)).